A 341-amino-acid chain; its full sequence is Anthranilate phosphoribosyltransferase (341 aa).

5-phospho-alpha-D-ribose 1-diphosphate contacts are provided by residues Gly80, 83-84, Thr88, 90-93, 108-116, and Ser120; these read GD, NIST, and KHGNRSVSS. Position 80 (Gly80) interacts with anthranilate. Ser92 serves as a coordination point for Mg(2+). Residue Asn111 participates in anthranilate binding. An anthranilate-binding site is contributed by Arg166. Residues Asp225 and Glu226 each contribute to the Mg(2+) site.

The protein belongs to the anthranilate phosphoribosyltransferase family. In terms of assembly, homodimer. It depends on Mg(2+) as a cofactor.

The catalysed reaction is N-(5-phospho-beta-D-ribosyl)anthranilate + diphosphate = 5-phospho-alpha-D-ribose 1-diphosphate + anthranilate. The protein operates within amino-acid biosynthesis; L-tryptophan biosynthesis; L-tryptophan from chorismate: step 2/5. In terms of biological role, catalyzes the transfer of the phosphoribosyl group of 5-phosphorylribose-1-pyrophosphate (PRPP) to anthranilate to yield N-(5'-phosphoribosyl)-anthranilate (PRA). This Shouchella clausii (strain KSM-K16) (Alkalihalobacillus clausii) protein is Anthranilate phosphoribosyltransferase.